The following is a 542-amino-acid chain: Keratin, type II cytoskeletal 75 (542 aa).

The segment covering 1-26 (MSRQSTVTFHSGSRRGFSTASATTPT) has biased composition (polar residues). The interval 1–44 (MSRQSTVTFHSGSRRGFSTASATTPTAGRSRFSSVSVARSSGNS) is disordered. Residues 1-139 (MSRQSTVTFH…DPTIQRVRKE (139 aa)) form a head region. The segment covering 27-42 (AGRSRFSSVSVARSSG) has biased composition (low complexity). The segment at 140 to 175 (EREQIKTLNNKFASFIDKVRFLEQQNKVLETKWNLL) is coil 1A. Positions 140 to 453 (EREQIKTLNN…KLLEGEECRL (314 aa)) constitute an IF rod domain. The interval 176–194 (QEQGSRTVRQNLEPFFDAY) is linker 1. Positions 195-287 (VNDLRRQLDS…VYEAELSQMQ (93 aa)) are coil 1B. Positions 288 to 310 (NQVSDTSVVLSMDNNRSLDLDSI) are linker 12. The segment at 311 to 449 (IAEVKAQYED…ATYRKLLEGE (139 aa)) is coil 2. Residues 450-542 (ECRLSGEGVS…TSSSRKSYKH (93 aa)) form a tail region. The disordered stretch occupies residues 514–542 (TSSSRGPVGSGSSIKFVSSTSSSRKSYKH).

Belongs to the intermediate filament family. Heterodimer of a type I and a type II keratin. May associate with KRT17.

Its function is as follows. Plays a central role in hair and nail formation. Essential component of keratin intermediate filaments in the companion layer of the hair follicle. The polypeptide is Keratin, type II cytoskeletal 75 (Krt75) (Rattus norvegicus (Rat)).